The following is a 187-amino-acid chain: Elongation factor P (187 aa).

Belongs to the elongation factor P family.

It is found in the cytoplasm. It participates in protein biosynthesis; polypeptide chain elongation. Its function is as follows. Involved in peptide bond synthesis. Stimulates efficient translation and peptide-bond synthesis on native or reconstituted 70S ribosomes in vitro. Probably functions indirectly by altering the affinity of the ribosome for aminoacyl-tRNA, thus increasing their reactivity as acceptors for peptidyl transferase. This is Elongation factor P from Roseiflexus sp. (strain RS-1).